We begin with the raw amino-acid sequence, 494 residues long: 4-trimethylaminobutyraldehyde dehydrogenase (494 aa).

Residue serine 2 is modified to N-acetylserine. Residue lysine 30 is modified to N6-acetyllysine; alternate. Lysine 30 bears the N6-succinyllysine; alternate mark. Position 59 is an N6-succinyllysine (lysine 59). NAD(+)-binding positions include lysine 180 and 232–236; that span reads GSVPT. The active-site Proton acceptor is the glutamate 254. Residue cysteine 288 is the Nucleophile of the active site. At lysine 298 the chain carries N6-acetyllysine. Lysine 303 is modified (N6-acetyllysine; alternate). Residue lysine 303 is modified to N6-succinyllysine; alternate. An N6-acetyllysine modification is found at lysine 344. Residue glutamate 391 coordinates NAD(+).

It belongs to the aldehyde dehydrogenase family. As to quaternary structure, homotetramer.

The protein localises to the cytoplasm. It is found in the cytosol. It carries out the reaction 4-(trimethylamino)butanal + NAD(+) + H2O = 4-(trimethylamino)butanoate + NADH + 2 H(+). The catalysed reaction is an aldehyde + NAD(+) + H2O = a carboxylate + NADH + 2 H(+). It catalyses the reaction 4-aminobutanal + NAD(+) + H2O = 4-aminobutanoate + NADH + 2 H(+). The enzyme catalyses formaldehyde + NAD(+) + H2O = formate + NADH + 2 H(+). It carries out the reaction acetaldehyde + NAD(+) + H2O = acetate + NADH + 2 H(+). The catalysed reaction is imidazole-4-acetaldehyde + NAD(+) + H2O = imidazole-4-acetate + NADH + 2 H(+). It catalyses the reaction acrolein + NAD(+) + H2O = acrylate + NADH + 2 H(+). The enzyme catalyses (5-hydroxyindol-3-yl)acetaldehyde + NAD(+) + H2O = (5-hydroxyindol-3-yl)acetate + NADH + 2 H(+). It carries out the reaction 3,4-dihydroxyphenylacetaldehyde + NAD(+) + H2O = 3,4-dihydroxyphenylacetate + NADH + 2 H(+). The catalysed reaction is spermine monoaldehyde + NAD(+) + H2O = N-(2-carboxyethyl)spermidine + NADH + 2 H(+). It catalyses the reaction propanal + NAD(+) + H2O = propanoate + NADH + 2 H(+). The enzyme catalyses butanal + NAD(+) + H2O = butanoate + NADH + 2 H(+). It carries out the reaction pentanal + NAD(+) + H2O = pentanoate + NADH + 2 H(+). The catalysed reaction is hexanal + NAD(+) + H2O = hexanoate + NADH + 2 H(+). The protein operates within amine and polyamine biosynthesis; carnitine biosynthesis. Functionally, converts gamma-trimethylaminobutyraldehyde into gamma-butyrobetaine with high efficiency (in vitro). Can catalyze the irreversible oxidation of a broad range of aldehydes to the corresponding acids in an NAD-dependent reaction, but with low efficiency. Catalyzes the oxidation of aldehydes arising from biogenic amines and polyamines. The polypeptide is 4-trimethylaminobutyraldehyde dehydrogenase (ALDH9A1) (Sus scrofa (Pig)).